Consider the following 466-residue polypeptide: Probable Xaa-Pro aminopeptidase pepP (466 aa).

Positions 264, 275, 398, and 438 each coordinate Mn(2+).

This sequence belongs to the peptidase M24B family. Mn(2+) serves as cofactor.

The catalysed reaction is Release of any N-terminal amino acid, including proline, that is linked to proline, even from a dipeptide or tripeptide.. In terms of biological role, catalyzes the removal of a penultimate prolyl residue from the N-termini of peptides. This chain is Probable Xaa-Pro aminopeptidase pepP (pepP), found in Aspergillus terreus (strain NIH 2624 / FGSC A1156).